A 487-amino-acid chain; its full sequence is N-succinylglutamate 5-semialdehyde dehydrogenase (487 aa).

Residue 221–226 (GSSDTG) participates in NAD(+) binding. Active-site residues include Glu-244 and Cys-278.

This sequence belongs to the aldehyde dehydrogenase family. AstD subfamily.

It carries out the reaction N-succinyl-L-glutamate 5-semialdehyde + NAD(+) + H2O = N-succinyl-L-glutamate + NADH + 2 H(+). It functions in the pathway amino-acid degradation; L-arginine degradation via AST pathway; L-glutamate and succinate from L-arginine: step 4/5. Functionally, catalyzes the NAD-dependent reduction of succinylglutamate semialdehyde into succinylglutamate. This is N-succinylglutamate 5-semialdehyde dehydrogenase from Burkholderia lata (strain ATCC 17760 / DSM 23089 / LMG 22485 / NCIMB 9086 / R18194 / 383).